A 305-amino-acid chain; its full sequence is Protoheme IX farnesyltransferase 2 (305 aa).

8 helical membrane-spanning segments follow: residues 38–58 (LITT…SFLG), 60–80 (INTV…SCAI), 115–135 (ILLV…AAVI), 157–177 (INTV…WTAV), 181–201 (IGVV…PHFL), 227–247 (VTKR…FFLG), 249–269 (LGLP…ILGL), and 285–305 (FVYS…LTLF).

The protein belongs to the UbiA prenyltransferase family. Protoheme IX farnesyltransferase subfamily. As to quaternary structure, interacts with CtaA.

The protein localises to the cell membrane. It catalyses the reaction heme b + (2E,6E)-farnesyl diphosphate + H2O = Fe(II)-heme o + diphosphate. Its pathway is porphyrin-containing compound metabolism; heme O biosynthesis; heme O from protoheme: step 1/1. Functionally, converts heme B (protoheme IX) to heme O by substitution of the vinyl group on carbon 2 of heme B porphyrin ring with a hydroxyethyl farnesyl side group. This Bacillus subtilis (strain 168) protein is Protoheme IX farnesyltransferase 2 (ctaB2).